The chain runs to 494 residues: UPF0371 protein SP_0341 (494 aa).

Belongs to the UPF0371 family.

The chain is UPF0371 protein SP_0341 from Streptococcus pneumoniae serotype 4 (strain ATCC BAA-334 / TIGR4).